The sequence spans 387 residues: Probable peptidoglycan glycosyltransferase FtsW (387 aa).

9 helical membrane passes run leucine 19–alanine 39, isoleucine 61–valine 81, serine 86–glycine 106, leucine 118–alanine 138, valine 161–isoleucine 181, phenylalanine 199–tyrosine 219, phenylalanine 286–leucine 306, tyrosine 320–alanine 340, and proline 352–phenylalanine 372.

Belongs to the SEDS family. FtsW subfamily.

It is found in the cell inner membrane. The catalysed reaction is [GlcNAc-(1-&gt;4)-Mur2Ac(oyl-L-Ala-gamma-D-Glu-L-Lys-D-Ala-D-Ala)](n)-di-trans,octa-cis-undecaprenyl diphosphate + beta-D-GlcNAc-(1-&gt;4)-Mur2Ac(oyl-L-Ala-gamma-D-Glu-L-Lys-D-Ala-D-Ala)-di-trans,octa-cis-undecaprenyl diphosphate = [GlcNAc-(1-&gt;4)-Mur2Ac(oyl-L-Ala-gamma-D-Glu-L-Lys-D-Ala-D-Ala)](n+1)-di-trans,octa-cis-undecaprenyl diphosphate + di-trans,octa-cis-undecaprenyl diphosphate + H(+). The protein operates within cell wall biogenesis; peptidoglycan biosynthesis. Peptidoglycan polymerase that is essential for cell division. This is Probable peptidoglycan glycosyltransferase FtsW from Saccharophagus degradans (strain 2-40 / ATCC 43961 / DSM 17024).